Reading from the N-terminus, the 397-residue chain is L-rhamnonate dehydratase (397 aa).

Residues His-25 and Arg-51 each coordinate substrate. Asp-217, Glu-243, and Glu-271 together coordinate Mg(2+). The active-site Proton acceptor is His-321. Residue Glu-341 coordinates substrate.

The protein belongs to the mandelate racemase/muconate lactonizing enzyme family. RhamD subfamily. In terms of assembly, homooctamer; tetramer of dimers. Mg(2+) serves as cofactor.

The catalysed reaction is L-rhamnonate = 2-dehydro-3-deoxy-L-rhamnonate + H2O. Its pathway is carbohydrate degradation; L-rhamnose degradation. Catalyzes the dehydration of L-rhamnonate to 2-keto-3-deoxy-L-rhamnonate (KDR). Also shows activity with L-lyxonate and L-mannonate, with much lower catalytic efficiency. Catalyzes the third step in an alternative pathway for rhamnose utilization that does not involve phosphorylated intermediates. In Sphingomonas sp. (strain SKA58), this protein is L-rhamnonate dehydratase.